The primary structure comprises 378 residues: Mannitol-1-phosphate 5-dehydrogenase (378 aa).

4–15 (SVHFGAGNIGRG) provides a ligand contact to NAD(+).

The protein belongs to the mannitol dehydrogenase family.

It carries out the reaction D-mannitol 1-phosphate + NAD(+) = beta-D-fructose 6-phosphate + NADH + H(+). In Streptococcus pneumoniae (strain 70585), this protein is Mannitol-1-phosphate 5-dehydrogenase.